The sequence spans 120 residues: Prophage bactoprenol-linked glucose translocase homolog (120 aa).

Residues Met1–Thr9 are Cytoplasmic-facing. A helical transmembrane segment spans residues Ser10–Ala30. At His31 to Asn33 the chain is on the periplasmic side. The chain crosses the membrane as a helical span at residues Gln34–Ala54. Over Lys55 to Thr64 the chain is Cytoplasmic. The chain crosses the membrane as a helical span at residues Met65–Ala85. Residues Asp86–Cys88 lie on the Periplasmic side of the membrane. Residues Ala89–Val109 traverse the membrane as a helical segment. Residues Tyr110–Lys120 are Cytoplasmic-facing.

This sequence belongs to the GtrA family.

It localises to the cell inner membrane. Functionally, involved in O antigen modification. Involved in the translocation of bactoprenol-linked glucose across the cytoplasmic membrane. The sequence is that of Prophage bactoprenol-linked glucose translocase homolog (yfdG) from Escherichia coli (strain K12).